We begin with the raw amino-acid sequence, 491 residues long: Glycogen synthase (491 aa).

Lys-15 is a binding site for ADP-alpha-D-glucose.

It belongs to the glycosyltransferase 1 family. Bacterial/plant glycogen synthase subfamily.

It carries out the reaction [(1-&gt;4)-alpha-D-glucosyl](n) + ADP-alpha-D-glucose = [(1-&gt;4)-alpha-D-glucosyl](n+1) + ADP + H(+). It participates in glycan biosynthesis; glycogen biosynthesis. Synthesizes alpha-1,4-glucan chains using ADP-glucose. In Hydrogenovibrio crunogenus (strain DSM 25203 / XCL-2) (Thiomicrospira crunogena), this protein is Glycogen synthase.